A 257-amino-acid polypeptide reads, in one-letter code: Transmembrane protein C257L (257 aa).

2 consecutive transmembrane segments (helical) span residues 123–143 (LELLGYSPTSLIGGDLMFTAL) and 163–183 (MMIFFLIILLCIILGIFYVLV).

The protein belongs to the asfivirus C257R family.

It is found in the host membrane. It localises to the virion. The chain is Transmembrane protein C257L from Ornithodoros (relapsing fever ticks).